Here is a 293-residue protein sequence, read N- to C-terminus: Ribosomal protein L11 methyltransferase (293 aa).

4 residues coordinate S-adenosyl-L-methionine: Thr145, Gly166, Asp188, and Asn230.

It belongs to the methyltransferase superfamily. PrmA family.

It is found in the cytoplasm. It catalyses the reaction L-lysyl-[protein] + 3 S-adenosyl-L-methionine = N(6),N(6),N(6)-trimethyl-L-lysyl-[protein] + 3 S-adenosyl-L-homocysteine + 3 H(+). Its function is as follows. Methylates ribosomal protein L11. The sequence is that of Ribosomal protein L11 methyltransferase from Citrobacter koseri (strain ATCC BAA-895 / CDC 4225-83 / SGSC4696).